Here is a 346-residue protein sequence, read N- to C-terminus: Isopentenyl-diphosphate delta-isomerase (346 aa).

9-10 (RK) contributes to the substrate binding site. FMN-binding positions include serine 67, 68 to 70 (SMT), serine 98, and asparagine 127. Position 98–100 (98–100 (SQR)) interacts with substrate. Substrate is bound at residue glutamine 162. Glutamate 163 provides a ligand contact to Mg(2+). FMN is bound by residues lysine 194, threonine 224, 274–276 (GIR), and 295–296 (AA).

The protein belongs to the IPP isomerase type 2 family. In terms of assembly, homooctamer. Dimer of tetramers. It depends on FMN as a cofactor. Requires NADPH as cofactor. Mg(2+) serves as cofactor.

Its subcellular location is the cytoplasm. The catalysed reaction is isopentenyl diphosphate = dimethylallyl diphosphate. Functionally, involved in the biosynthesis of isoprenoids. Catalyzes the 1,3-allylic rearrangement of the homoallylic substrate isopentenyl (IPP) to its allylic isomer, dimethylallyl diphosphate (DMAPP). This is Isopentenyl-diphosphate delta-isomerase from Stutzerimonas stutzeri (strain A1501) (Pseudomonas stutzeri).